A 232-amino-acid polypeptide reads, in one-letter code: Octanoyltransferase (232 aa).

The BPL/LPL catalytic domain occupies 44–219 (EYTADEIWVV…QLARQFGLVL (176 aa)). Substrate is bound by residues 83–90 (RGGQVTYH), 150–152 (ALG), and 163–165 (GLS). Cys-181 serves as the catalytic Acyl-thioester intermediate.

The protein belongs to the LipB family.

Its subcellular location is the cytoplasm. The enzyme catalyses octanoyl-[ACP] + L-lysyl-[protein] = N(6)-octanoyl-L-lysyl-[protein] + holo-[ACP] + H(+). The protein operates within protein modification; protein lipoylation via endogenous pathway; protein N(6)-(lipoyl)lysine from octanoyl-[acyl-carrier-protein]: step 1/2. Its function is as follows. Catalyzes the transfer of endogenously produced octanoic acid from octanoyl-acyl-carrier-protein onto the lipoyl domains of lipoate-dependent enzymes. Lipoyl-ACP can also act as a substrate although octanoyl-ACP is likely to be the physiological substrate. In Xanthomonas axonopodis pv. citri (strain 306), this protein is Octanoyltransferase.